A 427-amino-acid polypeptide reads, in one-letter code: Trigger factor (427 aa).

One can recognise a PPIase FKBP-type domain in the interval 163–248; the sequence is GDTVVIDFVG…IHEVKEKEVP (86 aa).

It belongs to the FKBP-type PPIase family. Tig subfamily.

The protein resides in the cytoplasm. The enzyme catalyses [protein]-peptidylproline (omega=180) = [protein]-peptidylproline (omega=0). Involved in protein export. Acts as a chaperone by maintaining the newly synthesized protein in an open conformation. Functions as a peptidyl-prolyl cis-trans isomerase. In Streptococcus sanguinis (strain SK36), this protein is Trigger factor.